A 455-amino-acid chain; its full sequence is Anthocyanidin 3-O-glucosyltransferase (455 aa).

H18 acts as the Proton acceptor in catalysis. Position 18 (H18) interacts with an anthocyanidin. Residue D118 is the Charge relay of the active site. T139 provides a ligand contact to UDP-alpha-D-glucose. Residue H148 participates in an anthocyanidin binding. UDP-alpha-D-glucose is bound by residues A336, Q338, H353, W356, S358, and E361. G376 contacts an anthocyanidin. The UDP-alpha-D-glucose site is built by D377 and Q378.

The protein belongs to the UDP-glycosyltransferase family.

It catalyses the reaction an anthocyanidin + UDP-alpha-D-glucose + H(+) = an anthocyanidin 3-O-beta-D-glucoside + UDP. It participates in pigment biosynthesis; anthocyanin biosynthesis. Functionally, in the presence of other necessary color factors, this glycosylation reaction allows the accumulation of anthocyanin pigments. The sequence is that of Anthocyanidin 3-O-glucosyltransferase (BZ1) from Hordeum vulgare (Barley).